The chain runs to 309 residues: Serine/threonine-protein phosphatase PP2A catalytic subunit (309 aa).

Residues Asp-57, His-59, Asp-85, and Asn-117 each contribute to the Mn(2+) site. Catalysis depends on His-118, which acts as the Proton donor. His-167 and His-241 together coordinate Mn(2+).

The protein belongs to the PPP phosphatase family. PP-2A subfamily. Mn(2+) serves as cofactor.

The enzyme catalyses O-phospho-L-seryl-[protein] + H2O = L-seryl-[protein] + phosphate. It catalyses the reaction O-phospho-L-threonyl-[protein] + H2O = L-threonyl-[protein] + phosphate. This Brassica napus (Rape) protein is Serine/threonine-protein phosphatase PP2A catalytic subunit.